The sequence spans 403 residues: Cytochrome P450 monooxygenase ustC (403 aa).

Positions 1–18 (MSPFIFAVTLTFAILALG) are cleaved as a signal peptide. N52 and N92 each carry an N-linked (GlcNAc...) asparagine glycan. C318 contacts heme.

It belongs to the cytochrome P450 family. The cofactor is heme.

Its pathway is mycotoxin biosynthesis. Functionally, cytochrome P450 monooxygenase; part of the gene cluster that mediates the biosynthesis of the secondary metabolite ustiloxin B, an antimitotic tetrapeptide. First, ustA is processed by the subtilisin-like endoprotease Kex2 that is outside the ustiloxin B gene cluster, at the C-terminal side of Arg-Lys, after transfer to Golgi apparatus through the endoplasmic reticulum (ER). Cleavage by KEX2 generates 16 peptides YAIG-I to YAIG-XVI. To process the precursor peptide further, at least two peptidases are necessary to cleave the N-terminal and C-terminal sides of the Tyr-Ala-Ile-Gly core peptide which serves as backbone for the synthesis of ustiloxin B, through cyclization and modification of the tyrosine with a non-protein coding amino acid, norvaline. One of the two peptidases must be the serine peptidase ustP; and the other pepdidase is probably ustH. Macrocyclization of the core peptide derived from ustA requires the tyrosinase ustQ, as well as the homologous oxidases ustYa and ustYb, and leads to the production of the first cyclization product N-desmethylustiloxin F. For the formation of N-desmethylustiloxin F, three oxidation steps are required, hydroxylation at the benzylic position, hydroxylation at either the aromatic ring of Tyr or beta-position of Ile, and oxidative cyclization. UstQ may catalyze the oxidation of a phenol moiety, whereas the ustYa and ustYb are most likely responsible for the remaining two-step oxidations. N-desmethylustiloxin F is then methylated by ustM to yield ustiloxin F which in turn substrate of the cytochrome P450 monooxygenase ustC which catalyzes the formation of S-deoxyustiloxin H. The flavoprotein monooxygenases ustF1 and ustF2 then participate in the modification of the side chain of S-deoxyustiloxin H, leading to the synthesis of an oxime intermediate, via ustiloxin H. Finally, carboxylative dehydration performed by the cysteine desulfurase-like protein ustD yields ustiloxin B. This Aspergillus flavus (strain ATCC 200026 / FGSC A1120 / IAM 13836 / NRRL 3357 / JCM 12722 / SRRC 167) protein is Cytochrome P450 monooxygenase ustC.